A 258-amino-acid polypeptide reads, in one-letter code: Ribosomal RNA small subunit methyltransferase J (258 aa).

S-adenosyl-L-methionine is bound by residues 123-124 (ER) and Asp177. Residues 232–258 (IDGPKPSHSLEGKSSRYDIYPKKALKA) form a disordered region. Positions 239–252 (HSLEGKSSRYDIYP) are enriched in basic and acidic residues.

Belongs to the methyltransferase superfamily. RsmJ family.

It is found in the cytoplasm. It carries out the reaction guanosine(1516) in 16S rRNA + S-adenosyl-L-methionine = N(2)-methylguanosine(1516) in 16S rRNA + S-adenosyl-L-homocysteine + H(+). Functionally, specifically methylates the guanosine in position 1516 of 16S rRNA. The sequence is that of Ribosomal RNA small subunit methyltransferase J from Pseudomonas putida (strain GB-1).